The chain runs to 119 residues: Aspartate 1-decarboxylase (119 aa).

The active-site Schiff-base intermediate with substrate; via pyruvic acid is the serine 25. The residue at position 25 (serine 25) is a Pyruvic acid (Ser). Substrate is bound at residue threonine 57. Tyrosine 58 serves as the catalytic Proton donor. 73 to 75 (GAA) is a binding site for substrate.

This sequence belongs to the PanD family. Heterooctamer of four alpha and four beta subunits. It depends on pyruvate as a cofactor. Post-translationally, is synthesized initially as an inactive proenzyme, which is activated by self-cleavage at a specific serine bond to produce a beta-subunit with a hydroxyl group at its C-terminus and an alpha-subunit with a pyruvoyl group at its N-terminus.

It is found in the cytoplasm. It catalyses the reaction L-aspartate + H(+) = beta-alanine + CO2. It participates in cofactor biosynthesis; (R)-pantothenate biosynthesis; beta-alanine from L-aspartate: step 1/1. Its function is as follows. Catalyzes the pyruvoyl-dependent decarboxylation of aspartate to produce beta-alanine. The chain is Aspartate 1-decarboxylase from Thermosipho melanesiensis (strain DSM 12029 / CIP 104789 / BI429).